Consider the following 506-residue polypeptide: Probable Xaa-Pro aminopeptidase PADG_06815 (506 aa).

Residues Asp-285, Asp-296, Glu-433, and Glu-471 each contribute to the Mn(2+) site.

This sequence belongs to the peptidase M24B family. Mn(2+) serves as cofactor.

It carries out the reaction Release of any N-terminal amino acid, including proline, that is linked to proline, even from a dipeptide or tripeptide.. Its function is as follows. Catalyzes the removal of a penultimate prolyl residue from the N-termini of peptides. The protein is Probable Xaa-Pro aminopeptidase PADG_06815 of Paracoccidioides brasiliensis (strain Pb18).